We begin with the raw amino-acid sequence, 249 residues long: 3-deoxy-manno-octulosonate cytidylyltransferase (249 aa).

It belongs to the KdsB family.

The protein localises to the cytoplasm. The enzyme catalyses 3-deoxy-alpha-D-manno-oct-2-ulosonate + CTP = CMP-3-deoxy-beta-D-manno-octulosonate + diphosphate. Its pathway is nucleotide-sugar biosynthesis; CMP-3-deoxy-D-manno-octulosonate biosynthesis; CMP-3-deoxy-D-manno-octulosonate from 3-deoxy-D-manno-octulosonate and CTP: step 1/1. It participates in bacterial outer membrane biogenesis; lipopolysaccharide biosynthesis. Its function is as follows. Activates KDO (a required 8-carbon sugar) for incorporation into bacterial lipopolysaccharide in Gram-negative bacteria. This chain is 3-deoxy-manno-octulosonate cytidylyltransferase, found in Photorhabdus laumondii subsp. laumondii (strain DSM 15139 / CIP 105565 / TT01) (Photorhabdus luminescens subsp. laumondii).